Reading from the N-terminus, the 116-residue chain is Toxin CSTX-10 (116 aa).

The first 20 residues, 1 to 20, serve as a signal peptide directing secretion; it reads MKVLVIFAVLSLVIFSNCSA. Residues 21 to 47 constitute a propeptide that is removed on maturation; the sequence is ETDEDFFGEESFEADDIIPFIAKEQVR. Cystine bridges form between Cys-53–Cys-68, Cys-60–Cys-77, Cys-67–Cys-94, and Cys-79–Cys-92.

In terms of tissue distribution, expressed by the venom gland.

It is found in the secreted. The protein resides in the target cell membrane. Functionally, spider venom toxin that shows calcium channel blocking activity and exhibits cytolytic activity by affecting the outer leaflet curvature and/or pore formation across the membrane. It blocks L-type calcium channels (Cav1/CACNA1) in mammalian neurons at nanomolar concentrations. Furthermore, it produces a slow voltage-independent block of mid/low and high voltage-activated calcium channels in cockroach neurons. Potassium ions, histamine, M-ctenitoxin-Cs1a (AC P83619), CSTX-9 (AC P58604), and CSTX-13 (AC P83919) synergistically increase the insecticidal activity of this toxin. In vivo, it causes paralysis in blow flies and provokes death in drosophila. The polypeptide is Toxin CSTX-10 (Cupiennius salei (American wandering spider)).